The primary structure comprises 560 residues: Arginine--tRNA ligase (560 aa).

The short motif at 135-145 (ANPTGLLHMGN) is the 'HIGH' region element.

Belongs to the class-I aminoacyl-tRNA synthetase family. In terms of assembly, monomer.

It localises to the cytoplasm. It catalyses the reaction tRNA(Arg) + L-arginine + ATP = L-arginyl-tRNA(Arg) + AMP + diphosphate. In Moorella thermoacetica (strain ATCC 39073 / JCM 9320), this protein is Arginine--tRNA ligase.